The primary structure comprises 1669 residues: Polycomb group protein Asx (1669 aa).

Positions 90 to 109 (IPPEKKPMAPSEEAAVSTAP) are disordered. One can recognise a DEUBAD domain in the interval 215 to 338 (PDSILASTNL…FEPFWGEKNS (124 aa)). 2 short sequence motifs (LXXLL motif) span residues 224-228 (LRALL) and 244-248 (LIQLL). The NEF motif signature appears at 283–285 (NEF). Residues 336–352 (KNSRGKDKDKLESDCKN) show a composition bias toward basic and acidic residues. Disordered regions lie at residues 336–378 (KNSR…QQAT), 410–478 (SSTF…IVPN), 635–718 (FFTS…SAGA), 952–972 (MPHQ…QQQR), 1174–1193 (QQQS…QQQL), 1398–1437 (PGPG…PEQL), 1482–1505 (LHSI…TAGS), and 1587–1610 (SPTA…QHQH). Composition is skewed to polar residues over residues 367-378 (ATSQQKPLQQAT), 413-425 (FPPT…VLNE), and 434-450 (PSSS…TIAT). The segment covering 465–474 (KDSKQPKMDE) has biased composition (basic and acidic residues). The segment covering 635-650 (FFTSSSSSNTATTAAN) has biased composition (low complexity). Over residues 651–661 (KLEEHSDKPED) the composition is skewed to basic and acidic residues. Over residues 666–718 (IASSISGSTPASSITSTSCTSSSSSSASMSSSCSSSNSGSTTTAPTTSSSAGA) the composition is skewed to low complexity. Composition is skewed to low complexity over residues 1174-1192 (QQQS…QQQQ) and 1404-1436 (TATA…APEQ). Residues 1592–1610 (PSPINQQPQSQPTGTQHQH) show a composition bias toward low complexity. The PHD-type; atypical zinc finger occupies 1602–1666 (QPTGTQHQHP…IGAAKLCVAC (65 aa)).

This sequence belongs to the Asx family. As to quaternary structure, component of the polycomb repressive deubiquitinase (PR-DUB) complex, at least composed of caly/calypso, Asx and sba (MBD5/6 homolog). Interacts (via DEUBAD domain) with caly/calypso (via ULD domain); the interaction produces a stable heterodimer with a composite binding site for ubiquitin. Two copies of the caly-Asx heterodimer assemble into a bidentate tetramer. Interacts (via PHD domain) with sba (probably via MBD domain); the interaction is important for the stability of the PR-DUB complex. Interacts with tant. Interacts with cyclin CycG. As to expression, highly expressed in nurse cells and deposited in oocytes late in oogenesis. Ubiquitous in early embryos. Late embryos show higher levels in CNS and neurectoderm.

It localises to the nucleus. The protein resides in the chromosome. Its function is as follows. Non-catalytic component of the polycomb repressive deubiquitinase (PR-DUB) complex, a complex that specifically mediates deubiquitination of histone H2A monoubiquitinated at 'Lys-119' (H2AK118ub1). Activator of the PR-DUB complex involved in ubiquitin binding and allosteric activation of calypso deubiquitinase activity. PR-DUB does not deubiquitinate monoubiquitinated histone H2B. PR-DUB is required to maintain the transcriptionally repressive state of homeotic genes throughout development. The PR-DUB complex has weak or no activity toward 'Lys-48'- and 'Lys-63'-linked polyubiquitin chains. Atypical Polycomb group protein, which may be involved in both Polycomb group (PcG) and trithorax group (trxG) complexes. PcG and trxG proteins act by forming multiprotein complexes, which are respectively required to maintain the transcriptionally repressive and transcriptionally active state of homeotic genes throughout development. PcG and trxG protein complexes are not required to initiate repression and activation, but to maintain it during later stages of development. This Drosophila melanogaster (Fruit fly) protein is Polycomb group protein Asx.